The primary structure comprises 59 residues: Large ribosomal subunit protein uL30 (59 aa).

The protein belongs to the universal ribosomal protein uL30 family. As to quaternary structure, part of the 50S ribosomal subunit.

The protein is Large ribosomal subunit protein uL30 of Geobacter sulfurreducens (strain ATCC 51573 / DSM 12127 / PCA).